The chain runs to 313 residues: FAM172 family protein homolog Y75B8A.31 (313 aa).

The tract at residues 293 to 313 (VKSENSKESDDEAPKSKKICV) is disordered. The span at 296-307 (ENSKESDDEAPK) shows a compositional bias: basic and acidic residues.

Belongs to the FAM172 family.

In Caenorhabditis elegans, this protein is FAM172 family protein homolog Y75B8A.31.